A 403-amino-acid chain; its full sequence is Tyrosine--tRNA ligase (403 aa).

Residues 42 to 51 carry the 'HIGH' region motif; that stretch reads PTAPDLHLGH. The 'KMSKS' region motif lies at 226 to 230; it reads KMSKS. Lys-229 lines the ATP pocket. In terms of domain architecture, S4 RNA-binding spans 336 to 396; sequence MPISAVLNKA…GKKAFGRITL (61 aa).

This sequence belongs to the class-I aminoacyl-tRNA synthetase family. TyrS type 2 subfamily. In terms of assembly, homodimer.

It is found in the cytoplasm. The catalysed reaction is tRNA(Tyr) + L-tyrosine + ATP = L-tyrosyl-tRNA(Tyr) + AMP + diphosphate + H(+). Catalyzes the attachment of tyrosine to tRNA(Tyr) in a two-step reaction: tyrosine is first activated by ATP to form Tyr-AMP and then transferred to the acceptor end of tRNA(Tyr). The protein is Tyrosine--tRNA ligase of Pseudomonas syringae pv. tomato (strain ATCC BAA-871 / DC3000).